We begin with the raw amino-acid sequence, 970 residues long: Sodium/calcium exchanger 1 (970 aa).

Residues 1–32 (MLQLRLLPTFSMGCHLLAVVALLFSHVDLISA) form the signal peptide. The Extracellular portion of the chain corresponds to 33–71 (ETEMEGEGNETGECTGSYYCKKGVILPIWEPQDPSFGDK). The N-linked (GlcNAc...) asparagine glycan is linked to N41. The helical transmembrane segment at 72-92 (IARATVYFVAMVYMFLGVSII) threads the bilayer. At 93–133 (ADRFMSSIEVITSQEKEITIKKPNGETTKTTVRIWNETVSN) the chain is on the cytoplasmic side. Residues 134–154 (LTLMALGSSAPEILLSVIEVC) traverse the membrane as a helical segment. Residues 138–178 (ALGSSAPEILLSVIEVCGHNFTAGDLGPSTIVGSAAFNMFI) form an Alpha-1 repeat. The Extracellular portion of the chain corresponds to 155 to 167 (GHNFTAGDLGPST). N157 carries an N-linked (GlcNAc...) asparagine glycan. Residues 168 to 188 (IVGSAAFNMFIIIALCVYVVP) traverse the membrane as a helical segment. Over 189-201 (DGETRKIKHLRVF) the chain is Cytoplasmic. The chain crosses the membrane as a helical span at residues 202–222 (FVTAAWSIFAYTWLYIILSVI). At 223–228 (SPGVVE) the chain is on the extracellular side. A helical membrane pass occupies residues 229 to 249 (VWEGLLTFFFFPICVVFAWVA). The Cytoplasmic segment spans residues 250 to 797 (DRRLLFYKYV…FVPPTEYWNG (548 aa)). The interval 251-270 (RRLLFYKYVYKRYRAGKQRG) is putative calmodulin-binding region. S282 and S389 each carry phosphoserine. Calx-beta domains lie at 393-493 (VNTE…VHLS) and 524-624 (ATVT…LEIG). Ca(2+) contacts are provided by E417, D453, D478, D479, I481, E483, E486, D530, D531, D532, E548, D584, D610, E611, E612, and E715. A helical membrane pass occupies residues 798-818 (WACFIVSILMIGILTAFIGDL). Residues 819–821 (ASH) are Extracellular-facing. A helical transmembrane segment spans residues 822–842 (FGCTIGLKDSVTAVVFVALGT). Residues 839–875 (ALGTSVPDTFASKVAATQDQYADASIGNVTGSNAVNV) form an Alpha-2 repeat. Topologically, residues 843-871 (SVPDTFASKVAATQDQYADASIGNVTGSN) are cytoplasmic. Residues 872–892 (AVNVFLGIGVAWSIAAIYHAA) traverse the membrane as a helical segment. Residues 893 to 903 (NGEQFKVSPGT) lie on the Extracellular side of the membrane. Residues 904 to 924 (LAFSVTLFTIFAFINVGVLLY) traverse the membrane as a helical segment. At 925–941 (RRRPEIGGELGGPRTAK) the chain is on the cytoplasmic side. Residues 942–962 (LLTSCLFVLLWLLYIFFSSLE) form a helical membrane-spanning segment. Residues 963-970 (AYCHIKGF) lie on the Extracellular side of the membrane.

The protein belongs to the Ca(2+):cation antiporter (CaCA) (TC 2.A.19) family. SLC8 subfamily. As to expression, cardiac sarcolemma (at protein level).

It is found in the cell membrane. Its subcellular location is the sarcolemma. The enzyme catalyses Ca(2+)(in) + 3 Na(+)(out) = Ca(2+)(out) + 3 Na(+)(in). With respect to regulation, activated by micromolar levels of Ca(2+). In the absence of regulatory Ca(2+), channels open rapidly, and then inactivate rapidly. Inactivation is enhanced by Na(+) and is inhibited by micromolar levels of Ca(2+). In terms of biological role, mediates the exchange of one Ca(2+) ion against three to four Na(+) ions across the cell membrane, and thereby contributes to the regulation of cytoplasmic Ca(2+) levels and Ca(2+)-dependent cellular processes. Contributes to Ca(2+) transport during excitation-contraction coupling in muscle. In a first phase, voltage-gated channels mediate the rapid increase of cytoplasmic Ca(2+) levels due to release of Ca(2+) stores from the endoplasmic reticulum. SLC8A1 mediates the export of Ca(2+) from the cell during the next phase, so that cytoplasmic Ca(2+) levels rapidly return to baseline. Required for normal embryonic heart development and the onset of heart contractions. This chain is Sodium/calcium exchanger 1 (SLC8A1), found in Canis lupus familiaris (Dog).